Reading from the N-terminus, the 306-residue chain is Serine/threonine-protein kinase mug51 (306 aa).

This sequence belongs to the STK19 family.

The catalysed reaction is L-seryl-[protein] + ATP = O-phospho-L-seryl-[protein] + ADP + H(+). The enzyme catalyses L-threonyl-[protein] + ATP = O-phospho-L-threonyl-[protein] + ADP + H(+). Serine/threonine-protein kinase. Has a role in meiosis. This Schizosaccharomyces pombe (strain 972 / ATCC 24843) (Fission yeast) protein is Serine/threonine-protein kinase mug51 (mug51).